The chain runs to 233 residues: H-2 class II histocompatibility antigen, A-F alpha chain (233 aa).

Residues 1 to 88 (EDDIEADHVG…KRSNFTPATN (88 aa)) are alpha-1. The Extracellular segment spans residues 1–195 (EDDIEADHVG…IPAPMSELTE (195 aa)). The tract at residues 89–182 (EAPQATVFPK…GLEEPVLKHW (94 aa)) is alpha-2. The region spanning 91-183 (PQATVFPKSP…LEEPVLKHWE (93 aa)) is the Ig-like C1-type domain. Cysteines 111 and 167 form a disulfide. Asn-122 is a glycosylation site (N-linked (GlcNAc...) asparagine). Residues 183–195 (EPEIPAPMSELTE) form a connecting peptide region. A helical membrane pass occupies residues 196 to 221 (TVVCALGLSVGLVGIVVGTIFIIQGL). At 222-233 (RSGGTSRHPGPL) the chain is on the cytoplasmic side.

Belongs to the MHC class II family.

Its subcellular location is the membrane. In Mus musculus (Mouse), this protein is H-2 class II histocompatibility antigen, A-F alpha chain (H2-Aa).